The sequence spans 437 residues: Carbonic anhydrase 9 (437 aa).

A signal peptide spans 1-31 (MASLGPSPWAPLSTPAPTAQLLLFLLLQVSA). Positions 32-95 (QPQGLSGMQG…RMEESLGLED (64 aa)) are proteoglycan-like (PG). The Extracellular portion of the chain corresponds to 32 to 390 (QPQGLSGMQG…HVNSCFTAGD (359 aa)). Positions 34-118 (QGLSGMQGEP…HGDEKGGGHS (85 aa)) are disordered. Over residues 50–79 (SGEDELGVDVLPSEEDAPEEADPPDGEDPP) the composition is skewed to acidic residues. A catalytic region spans residues 96-390 (LSTPEAPEHS…HVNSCFTAGD (295 aa)). Threonine 98 carries O-linked (GlcNAc...) threonine glycosylation. Residues 118–369 (SHWSYGGTLL…LNGRTIEASF (252 aa)) enclose the Alpha-carbonic anhydrase domain. Cysteine 135 and cysteine 315 form a disulfide bridge. Histidine 179 serves as the catalytic Proton donor/acceptor. Histidine 205, histidine 207, and histidine 230 together coordinate Zn(2+). 311–312 (TT) is a substrate binding site. The N-linked (GlcNAc...) asparagine glycan is linked to asparagine 325. The chain crosses the membrane as a helical span at residues 391–411 (ILALVFGLLFAVTSIAFLLQL). At 412–437 (RRQHRHRSGTKDRVSYSPAEMTETGA) the chain is on the cytoplasmic side. Tyrosine 427 is subject to Phosphotyrosine.

This sequence belongs to the alpha-carbonic anhydrase family. As to quaternary structure, forms oligomers linked by disulfide bonds. It depends on Zn(2+) as a cofactor. Asn-325 bears high-mannose type glycan structures.

The protein localises to the nucleus. It localises to the nucleolus. The protein resides in the cell membrane. Its subcellular location is the cell projection. It is found in the microvillus membrane. It carries out the reaction hydrogencarbonate + H(+) = CO2 + H2O. Inhibited by acetazolamide. Catalyzes the interconversion between carbon dioxide and water and the dissociated ions of carbonic acid (i.e. bicarbonate and hydrogen ions). This chain is Carbonic anhydrase 9 (Ca9), found in Mus musculus (Mouse).